The following is a 282-amino-acid chain: Putative SWIB domain-containing protein 070L (282 aa).

Positions 1 to 16 are enriched in low complexity; the sequence is MFQTTPKQVKPTTVPK. Residues 1–21 are disordered; sequence MFQTTPKQVKPTTVPKTGRKN. Residues 97 to 181 enclose the SWIB/MDM2 domain; that stretch reads GLEKPRMISE…QKYLKHCFDE (85 aa). The tract at residues 199-282 is disordered; it reads TDDQTTAEEA…KVKKEHKIKK (84 aa). A compositionally biased stretch (basic and acidic residues) spans 262–275; that stretch reads GKKDKENIPLEKVK.

This sequence belongs to the IIV-6 306R family.

In Invertebrate iridescent virus 3 (IIV-3), this protein is Putative SWIB domain-containing protein 070L.